We begin with the raw amino-acid sequence, 160 residues long: 6,7-dimethyl-8-ribityllumazine synthase (160 aa).

Residues Trp-27, Ala-59 to Glu-61, and Val-81 to Ile-83 contribute to the 5-amino-6-(D-ribitylamino)uracil site. Gln-86–Thr-87 is a (2S)-2-hydroxy-3-oxobutyl phosphate binding site. His-89 serves as the catalytic Proton donor. Asn-114 serves as a coordination point for 5-amino-6-(D-ribitylamino)uracil. Arg-128 serves as a coordination point for (2S)-2-hydroxy-3-oxobutyl phosphate.

The protein belongs to the DMRL synthase family. Homopentamer.

The catalysed reaction is (2S)-2-hydroxy-3-oxobutyl phosphate + 5-amino-6-(D-ribitylamino)uracil = 6,7-dimethyl-8-(1-D-ribityl)lumazine + phosphate + 2 H2O + H(+). It participates in cofactor biosynthesis; riboflavin biosynthesis; riboflavin from 2-hydroxy-3-oxobutyl phosphate and 5-amino-6-(D-ribitylamino)uracil: step 1/2. In terms of biological role, catalyzes the formation of 6,7-dimethyl-8-ribityllumazine by condensation of 5-amino-6-(D-ribitylamino)uracil with 3,4-dihydroxy-2-butanone 4-phosphate. This is the penultimate step in the biosynthesis of riboflavin. The polypeptide is 6,7-dimethyl-8-ribityllumazine synthase (Mycolicibacterium paratuberculosis (strain ATCC BAA-968 / K-10) (Mycobacterium paratuberculosis)).